A 396-amino-acid chain; its full sequence is (S)-8-oxocitronellyl enol synthase ISY2 (396 aa).

Residues 38 to 40 (TGL), 66 to 67 (RR), 84 to 85 (DV), 108 to 109 (TW), glutamine 146, tyrosine 182, isoleucine 209, and 216 to 218 (SMM) contribute to the NADP(+) site. Residue tyrosine 182 is part of the active site.

It belongs to the short-chain dehydrogenases/reductases (SDR) family.

The catalysed reaction is (S)-8-oxocitronellyl enol + NADP(+) = (6E)-8-oxogeranial + NADPH + H(+). It carries out the reaction (S)-8-oxocitronellyl enol + NAD(+) = (6E)-8-oxogeranial + NADH + H(+). Functionally, iridoid synthase that catalyzes the first step in generation of the iridoid ring scaffold using the linear monoterpene (6E)-8-oxogeranial as substrate. Iridoids comprise a large family of distinctive bicyclic monoterpenes that possess a wide range of pharmacological activities, including anticancer, anti-inflammatory, antifungal and antibacterial activities. Catalyzes the conversion of the linear monoterpene (6E)-8-oxogeranial to (S)-8-oxocitronellyl enol, a precursor of nepetalactones, which are metabolites that are both insect-repellent and have euphoric effect in cats. The sequence is that of (S)-8-oxocitronellyl enol synthase ISY2 from Nepeta racemosa (Catmint).